The chain runs to 246 residues: DNA repair protein RecO (246 aa).

It belongs to the RecO family.

Functionally, involved in DNA repair and RecF pathway recombination. The sequence is that of DNA repair protein RecO from Marinobacter nauticus (strain ATCC 700491 / DSM 11845 / VT8) (Marinobacter aquaeolei).